The primary structure comprises 210 residues: Somatotropin-2 (210 aa).

Residues 1 to 22 (MARALVLLSVVLVSLLVNQGRA) form the signal peptide. Histidine 38 is a binding site for Zn(2+). A disulfide bridge links cysteine 71 with cysteine 183. Zn(2+) is bound at residue glutamate 192. Cysteine 200 and cysteine 208 form a disulfide bridge.

It belongs to the somatotropin/prolactin family.

It is found in the secreted. Growth hormone plays an important role in growth control and is involved in the regulation of several anabolic processes. Implicated as an osmoregulatory substance important for seawater adaptation. The sequence is that of Somatotropin-2 (gh2) from Carassius auratus (Goldfish).